The primary structure comprises 48 residues: ATP synthase protein 8 (48 aa).

A helical membrane pass occupies residues 12–32 (LLTFGMLAISMLLYLVSTIIL).

It belongs to the ATPase protein 8 family. In terms of assembly, F-type ATPases have 2 components, CF(1) - the catalytic core - and CF(0) - the membrane proton channel.

It is found in the mitochondrion membrane. Functionally, mitochondrial membrane ATP synthase (F(1)F(0) ATP synthase or Complex V) produces ATP from ADP in the presence of a proton gradient across the membrane which is generated by electron transport complexes of the respiratory chain. F-type ATPases consist of two structural domains, F(1) - containing the extramembraneous catalytic core and F(0) - containing the membrane proton channel, linked together by a central stalk and a peripheral stalk. During catalysis, ATP synthesis in the catalytic domain of F(1) is coupled via a rotary mechanism of the central stalk subunits to proton translocation. Part of the complex F(0) domain. Minor subunit located with subunit a in the membrane. This is ATP synthase protein 8 (ATP8) from Debaryomyces hansenii (strain ATCC 36239 / CBS 767 / BCRC 21394 / JCM 1990 / NBRC 0083 / IGC 2968) (Yeast).